The following is a 376-amino-acid chain: Chaperone protein DnaJ (376 aa).

Residues 5–70 (DYYEILGVSK…QKRAAYDQYG (66 aa)) enclose the J domain. Residues 131-209 (GVTKEIRIPT…CHGHGRVERS (79 aa)) form a CR-type zinc finger. Zn(2+) is bound by residues cysteine 144, cysteine 147, cysteine 161, cysteine 164, cysteine 183, cysteine 186, cysteine 197, and cysteine 200. CXXCXGXG motif repeat units follow at residues 144–151 (CDVCHGSG), 161–168 (CPTCHGSG), 183–190 (CPHCQGRG), and 197–204 (CNKCHGHG).

This sequence belongs to the DnaJ family. As to quaternary structure, homodimer. It depends on Zn(2+) as a cofactor.

The protein localises to the cytoplasm. Its function is as follows. Participates actively in the response to hyperosmotic and heat shock by preventing the aggregation of stress-denatured proteins and by disaggregating proteins, also in an autonomous, DnaK-independent fashion. Unfolded proteins bind initially to DnaJ; upon interaction with the DnaJ-bound protein, DnaK hydrolyzes its bound ATP, resulting in the formation of a stable complex. GrpE releases ADP from DnaK; ATP binding to DnaK triggers the release of the substrate protein, thus completing the reaction cycle. Several rounds of ATP-dependent interactions between DnaJ, DnaK and GrpE are required for fully efficient folding. Also involved, together with DnaK and GrpE, in the DNA replication of plasmids through activation of initiation proteins. This chain is Chaperone protein DnaJ, found in Shigella flexneri.